The primary structure comprises 349 residues: uncharacterized protein (349 aa).

Phosphoserine is present on Ser-2.

This is an uncharacterized protein from Saccharomyces cerevisiae (strain ATCC 204508 / S288c) (Baker's yeast).